We begin with the raw amino-acid sequence, 475 residues long: Ribosomal protein uS12 methylthiotransferase RimO (475 aa).

The MTTase N-terminal domain maps to 36-150 (NKINFISLGC…ILKAVQSTQK (115 aa)). Residues C45, C81, C113, C185, C189, and C192 each contribute to the [4Fe-4S] cluster site. Positions 171 to 403 (STPKHYAYLK…MQVQKKVVKK (233 aa)) constitute a Radical SAM core domain. A TRAM domain is found at 406 to 475 (KKMIGKKIAV…ADYDLVGHVI (70 aa)).

The protein belongs to the methylthiotransferase family. RimO subfamily. Requires [4Fe-4S] cluster as cofactor.

The protein localises to the cytoplasm. The enzyme catalyses L-aspartate(89)-[ribosomal protein uS12]-hydrogen + (sulfur carrier)-SH + AH2 + 2 S-adenosyl-L-methionine = 3-methylsulfanyl-L-aspartate(89)-[ribosomal protein uS12]-hydrogen + (sulfur carrier)-H + 5'-deoxyadenosine + L-methionine + A + S-adenosyl-L-homocysteine + 2 H(+). Functionally, catalyzes the methylthiolation of an aspartic acid residue of ribosomal protein uS12. The chain is Ribosomal protein uS12 methylthiotransferase RimO from Protochlamydia amoebophila (strain UWE25).